A 361-amino-acid chain; its full sequence is Probable dual-specificity RNA methyltransferase RlmN (361 aa).

E102 functions as the Proton acceptor in the catalytic mechanism. The Radical SAM core domain maps to 108-344; sequence SGDRLTVCVS…VRWSKGLGAD (237 aa). C115 and C347 form a disulfide bridge. [4Fe-4S] cluster is bound by residues C122, C126, and C129. Residues 169–170, S199, 228–230, and N304 each bind S-adenosyl-L-methionine; these read GE and SLH. C347 functions as the S-methylcysteine intermediate in the catalytic mechanism.

This sequence belongs to the radical SAM superfamily. RlmN family. [4Fe-4S] cluster serves as cofactor.

The protein localises to the cytoplasm. It carries out the reaction adenosine(2503) in 23S rRNA + 2 reduced [2Fe-2S]-[ferredoxin] + 2 S-adenosyl-L-methionine = 2-methyladenosine(2503) in 23S rRNA + 5'-deoxyadenosine + L-methionine + 2 oxidized [2Fe-2S]-[ferredoxin] + S-adenosyl-L-homocysteine. The enzyme catalyses adenosine(37) in tRNA + 2 reduced [2Fe-2S]-[ferredoxin] + 2 S-adenosyl-L-methionine = 2-methyladenosine(37) in tRNA + 5'-deoxyadenosine + L-methionine + 2 oxidized [2Fe-2S]-[ferredoxin] + S-adenosyl-L-homocysteine. In terms of biological role, specifically methylates position 2 of adenine 2503 in 23S rRNA and position 2 of adenine 37 in tRNAs. The protein is Probable dual-specificity RNA methyltransferase RlmN of Synechococcus elongatus (strain ATCC 33912 / PCC 7942 / FACHB-805) (Anacystis nidulans R2).